Consider the following 699-residue polypeptide: Keratinocyte proline-rich protein (699 aa).

Phosphoserine is present on serine 436. 2 stretches are compositionally biased toward pro residues: residues 448-477 (PYPRPEPCPSPEPRPCPRPRPRPEPCPSPE) and 513-533 (DPCPSPEPRPRPCPEPCPSPE). A disordered region spans residues 448–533 (PYPRPEPCPS…PCPEPCPSPE (86 aa)).

In terms of tissue distribution, expressed in the stratified squamous epithelial layers of the skin, esophagus and tongue.

It localises to the cytoplasm. The protein is Keratinocyte proline-rich protein (Kprp) of Rattus norvegicus (Rat).